The following is a 160-amino-acid chain: MSDDSELTHVTDDGDAQMVDVGEKPDTARRAVARGEITLQPSTVAAIETNDVEKGDVLAVARVGAIQAVKHTWETVPMCHQIPITNVDTEFSTSETAVELTVAVETTGKTGCEMEALEGVTTGLNVVWDMVKAAEKDADGQYPDTGIDSVEVIEKEKRAL.

A compositionally biased stretch (basic and acidic residues) spans 1 to 12 (MSDDSELTHVTD). A disordered region spans residues 1–24 (MSDDSELTHVTDDGDAQMVDVGEK). Substrate is bound by residues 78–80 (MCH) and 114–115 (ME). Residue Asp129 is part of the active site.

It belongs to the MoaC family. In terms of assembly, homohexamer; trimer of dimers.

The catalysed reaction is (8S)-3',8-cyclo-7,8-dihydroguanosine 5'-triphosphate = cyclic pyranopterin phosphate + diphosphate. The protein operates within cofactor biosynthesis; molybdopterin biosynthesis. Its function is as follows. Catalyzes the conversion of (8S)-3',8-cyclo-7,8-dihydroguanosine 5'-triphosphate to cyclic pyranopterin monophosphate (cPMP). This chain is Probable cyclic pyranopterin monophosphate synthase, found in Natronomonas pharaonis (strain ATCC 35678 / DSM 2160 / CIP 103997 / JCM 8858 / NBRC 14720 / NCIMB 2260 / Gabara) (Halobacterium pharaonis).